A 177-amino-acid polypeptide reads, in one-letter code: RNA silencing suppressor (177 aa).

In terms of assembly, homooctamer. The eight monomers assemble into a closed ring that binds RNA.

The protein resides in the host cytoplasm. Acts as a suppressor of RNA-mediated gene silencing, also known as post-transcriptional gene silencing (PTGS), a mechanism of plant viral defense that limits the accumulation of viral RNAs. Binds to ssRNAs and dsRNAs in vitro. Also functions as a replication enhancer. This is RNA silencing suppressor from Beta vulgaris (Sugar beet).